Reading from the N-terminus, the 173-residue chain is ATP synthase subunit b (173 aa).

The helical transmembrane segment at 15-35 threads the bilayer; the sequence is LYVGDMLFYAILFIVLMALIA.

Belongs to the ATPase B chain family. In terms of assembly, F-type ATPases have 2 components, F(1) - the catalytic core - and F(0) - the membrane proton channel. F(1) has five subunits: alpha(3), beta(3), gamma(1), delta(1), epsilon(1). F(0) has three main subunits: a(1), b(2) and c(10-14). The alpha and beta chains form an alternating ring which encloses part of the gamma chain. F(1) is attached to F(0) by a central stalk formed by the gamma and epsilon chains, while a peripheral stalk is formed by the delta and b chains.

The protein resides in the cell membrane. F(1)F(0) ATP synthase produces ATP from ADP in the presence of a proton or sodium gradient. F-type ATPases consist of two structural domains, F(1) containing the extramembraneous catalytic core and F(0) containing the membrane proton channel, linked together by a central stalk and a peripheral stalk. During catalysis, ATP synthesis in the catalytic domain of F(1) is coupled via a rotary mechanism of the central stalk subunits to proton translocation. In terms of biological role, component of the F(0) channel, it forms part of the peripheral stalk, linking F(1) to F(0). The sequence is that of ATP synthase subunit b from Pediococcus pentosaceus (strain ATCC 25745 / CCUG 21536 / LMG 10740 / 183-1w).